Consider the following 299-residue polypeptide: Glycine--tRNA ligase alpha subunit (299 aa).

The protein belongs to the class-II aminoacyl-tRNA synthetase family. Tetramer of two alpha and two beta subunits.

It localises to the cytoplasm. The catalysed reaction is tRNA(Gly) + glycine + ATP = glycyl-tRNA(Gly) + AMP + diphosphate. In Laribacter hongkongensis (strain HLHK9), this protein is Glycine--tRNA ligase alpha subunit.